The following is a 382-amino-acid chain: Glutamyl-tRNA reductase (382 aa).

Residues 38–41 (TCNR), Ser-85, 90–92 (ENQ), and Gln-96 each bind substrate. Cys-39 acts as the Nucleophile in catalysis. 164 to 169 (GAGEIG) contributes to the NADP(+) binding site.

It belongs to the glutamyl-tRNA reductase family. As to quaternary structure, homodimer.

It catalyses the reaction (S)-4-amino-5-oxopentanoate + tRNA(Glu) + NADP(+) = L-glutamyl-tRNA(Glu) + NADPH + H(+). Its pathway is porphyrin-containing compound metabolism; protoporphyrin-IX biosynthesis; 5-aminolevulinate from L-glutamyl-tRNA(Glu): step 1/2. Functionally, catalyzes the NADPH-dependent reduction of glutamyl-tRNA(Glu) to glutamate 1-semialdehyde (GSA). The chain is Glutamyl-tRNA reductase from Methanococcus maripaludis (strain C7 / ATCC BAA-1331).